Consider the following 254-residue polypeptide: Small ribosomal subunit protein uS2 (254 aa).

Residues 228-254 (DRGAEKEVEAAEEAPAAEAEAAPATEE) are disordered. Residues 240–254 (EAPAAEAEAAPATEE) are compositionally biased toward low complexity.

The protein belongs to the universal ribosomal protein uS2 family.

The sequence is that of Small ribosomal subunit protein uS2 from Flavobacterium johnsoniae (strain ATCC 17061 / DSM 2064 / JCM 8514 / BCRC 14874 / CCUG 350202 / NBRC 14942 / NCIMB 11054 / UW101) (Cytophaga johnsonae).